The chain runs to 229 residues: Urease accessory protein UreF (229 aa).

The protein belongs to the UreF family. As to quaternary structure, ureD, UreF and UreG form a complex that acts as a GTP-hydrolysis-dependent molecular chaperone, activating the urease apoprotein by helping to assemble the nickel containing metallocenter of UreC. The UreE protein probably delivers the nickel.

It localises to the cytoplasm. Its function is as follows. Required for maturation of urease via the functional incorporation of the urease nickel metallocenter. This chain is Urease accessory protein UreF, found in Alcanivorax borkumensis (strain ATCC 700651 / DSM 11573 / NCIMB 13689 / SK2).